We begin with the raw amino-acid sequence, 237 residues long: ATP synthase subunit a (237 aa).

Transmembrane regions (helical) follow at residues 18–38, 77–97, 103–123, 132–152, 185–205, and 209–229; these read STLW…VGTL, IFTL…PMAF, IAVT…LGFM, LFWV…IEVI, LILF…AIVA, and LEIL…CVYL.

Belongs to the ATPase A chain family. As to quaternary structure, F-type ATPases have 2 components, CF(1) - the catalytic core - and CF(0) - the membrane proton channel. CF(1) has five subunits: alpha(3), beta(3), gamma(1), delta(1), epsilon(1). CF(0) has three main subunits: a(1), b(2) and c(9-12). The alpha and beta chains form an alternating ring which encloses part of the gamma chain. CF(1) is attached to CF(0) by a central stalk formed by the gamma and epsilon chains, while a peripheral stalk is formed by the delta and b chains.

It localises to the cellular chromatophore membrane. Functionally, key component of the proton channel; it plays a direct role in the translocation of protons across the membrane. The polypeptide is ATP synthase subunit a (Rhodobacter capsulatus (Rhodopseudomonas capsulata)).